The primary structure comprises 352 residues: MEDSRETSPSSNNSSEELSSALQLSKGMSIFLDILRRADKNDDGKLSFEEFKAYFADGVLSGEELHELFHTIDTHNTNNLDTEELCEYFSQHLGEYENVLAALEDLNLSILKAMGKTKKDYQEASNLEQFVTRFLLKETLNQLQSLQNSLECAMETTEEQTRQERQGPSKPEVLSIQWPGKRSSRRVQRHNSFSPNSPQFNVSSPALLEEDNQWMTQINRLQKLIDRLEKKDLKLEPLEEEVIEENTKPHIMLVQRQMSVTEEDLEEFQLALKHYVESASAQSGCLRISIQKLSNESRYMIYEFWENSSVWNRHLQTNYSKTFQRSNVDFLETPELTSTMLVPASWWILKNN.

A Phosphoserine modification is found at Ser-4. EF-hand domains are found at residues 26 to 61 and 60 to 95; these read KGMSIFLDILRRADKNDDGKLSFEEFKAYFADGVLS and LSGEELHELFHTIDTHNTNNLDTEELCEYFSQHLGE. Ca(2+)-binding residues include Asp-39, Asn-41, Asp-43, Lys-45, and Glu-50. A coiled-coil region spans residues 135–163; it reads LLKETLNQLQSLQNSLECAMETTEEQTRQ. Residues 155 to 202 form a disordered region; sequence ETTEEQTRQERQGPSKPEVLSIQWPGKRSSRRVQRHNSFSPNSPQFNV. A compositionally biased stretch (polar residues) spans 190–202; it reads HNSFSPNSPQFNV. 2 positions are modified to phosphoserine: Ser-192 and Ser-197. Residues 209 to 275 adopt a coiled-coil conformation; sequence EEDNQWMTQI…EEFQLALKHY (67 aa). The 89-residue stretch at 252–340 folds into the ABM domain; that stretch reads MLVQRQMSVT…LETPELTSTM (89 aa).

As to quaternary structure, interacts with STX1. May interact with CPNE6.

The protein resides in the cytoplasm. The sequence is that of N-terminal EF-hand calcium-binding protein 1 (Necab1) from Rattus norvegicus (Rat).